Here is a 727-residue protein sequence, read N- to C-terminus: Ankyrin repeat domain-containing protein 6 (727 aa).

ANK repeat units follow at residues 9–38 (ALSE…RVAV), 41–70 (HGRT…DLDV), 74–103 (GDQT…ALDR), 107–136 (DGNT…NVLA), 140–169 (AGNT…RADL), 173–202 (AGDT…SVHE), 206–235 (AGDT…DTTI), and 239–268 (AGQT…VLRF). Positions 277-386 (KRERLKEERR…HRCSSPPPPH (110 aa)) are disordered. Residues 280–296 (RLKEERRAQSVPRDEVA) are compositionally biased toward basic and acidic residues. Positions 298–312 (SKGSVSAGDTPSSEQ) are enriched in polar residues. The segment covering 314-324 (VARKEEAREEF) has biased composition (basic and acidic residues). A compositionally biased stretch (basic residues) spans 363–379 (KNLHAHNHPKKRNRHRC). Positions 417–446 (LINKLENQLEATVEEIKAELGSVQDKMNTK) form a coiled coil. Over residues 548-557 (PAAASDSSPP) the composition is skewed to low complexity. 2 disordered regions span residues 548-586 (PAAA…CTGS) and 601-657 (NEAA…TGPH). Residues 566 to 584 (LNSTATQRLQQELSSSDCT) are compositionally biased toward polar residues. Residues 622–633 (KSGKSGPTRHRA) show a composition bias toward basic residues. Positions 682-727 (WYERKIEEARSQANQKAQQDKATLKEHIKSLEEELAKLRTRVQKEN) form a coiled coil.

In terms of assembly, interacts with AXN1, AXN2 and CSNK1E/CKI-epsilon.

Its function is as follows. Recruits CKI-epsilon to the beta-catenin degradation complex that consists of AXN1 or AXN2 and GSK3-beta and allows efficient phosphorylation of beta-catenin, thereby inhibiting beta-catenin/Tcf signals. The chain is Ankyrin repeat domain-containing protein 6 (ANKRD6) from Homo sapiens (Human).